A 518-amino-acid chain; its full sequence is 2-isopropylmalate synthase (518 aa).

Positions 24–275 constitute a Pyruvate carboxyltransferase domain; the sequence is VYIFDTTLRD…KTNIKTQKLY (252 aa). Aspartate 33, histidine 213, histidine 215, and asparagine 249 together coordinate a divalent metal cation.

This sequence belongs to the alpha-IPM synthase/homocitrate synthase family. As to quaternary structure, homodimer. A divalent metal cation serves as cofactor.

It catalyses the reaction 3-methyl-2-oxobutanoate + acetyl-CoA + H2O = (2S)-2-isopropylmalate + CoA + H(+). Its pathway is amino-acid biosynthesis; L-leucine biosynthesis; L-leucine from 3-methyl-2-oxobutanoate: step 1/4. Functionally, catalyzes the condensation of the acetyl group of acetyl-CoA with 3-methyl-2-oxobutanoate (2-oxoisovalerate) to form 3-carboxy-3-hydroxy-4-methylpentanoate (2-isopropylmalate). This is 2-isopropylmalate synthase (leuA) from Methanocaldococcus jannaschii (strain ATCC 43067 / DSM 2661 / JAL-1 / JCM 10045 / NBRC 100440) (Methanococcus jannaschii).